Reading from the N-terminus, the 441-residue chain is Tol-Pal system protein TolB (441 aa).

Residues 1 to 25 (MRIFFFAYVLPTVISLLLGCQGAIA) form the signal peptide.

This sequence belongs to the TolB family. As to quaternary structure, the Tol-Pal system is composed of five core proteins: the inner membrane proteins TolA, TolQ and TolR, the periplasmic protein TolB and the outer membrane protein Pal. They form a network linking the inner and outer membranes and the peptidoglycan layer.

Its subcellular location is the periplasm. Functionally, part of the Tol-Pal system, which plays a role in outer membrane invagination during cell division and is important for maintaining outer membrane integrity. This Anaplasma marginale (strain St. Maries) protein is Tol-Pal system protein TolB.